Reading from the N-terminus, the 662-residue chain is Replication protein E1 (662 aa).

Positions 28–38 (VDRRTGDKPSS) are enriched in basic and acidic residues. Positions 28–60 (VDRRTGDKPSSDEDEDEDADEGEDFVDFIDDRP) are disordered. The segment covering 39–55 (DEDEDEDADEGEDFVDF) has biased composition (acidic residues). The Nuclear localization signal signature appears at 88–90 (KRK). Ser94, Ser98, and Ser111 each carry phosphoserine; by host. Residues 110-119 (LSPRLDAIKL) carry the Nuclear export signal motif. The interval 160-197 (TQDGRQDADEGSGRNVGGNGGQEEERAGGDGEESQTQG) is disordered. The DNA-binding region stretch occupies residues 199–365 (QTDKAACGVL…QTMVGHALEE (167 aa)). Residues 464–614 (VEFIPFLCAF…FPLTTQGEPL (151 aa)) enclose the SF3 helicase domain. An ATP-binding site is contributed by 490–497 (GPADTGKS). Lys571 is covalently cross-linked (Glycyl lysine isopeptide (Lys-Gly) (interchain with G-Cter in SUMO)). A disordered region spans residues 637–662 (DPDDEEENGNPSEPFRCVPGQNARTL).

It belongs to the papillomaviridae E1 protein family. Can form hexamers. Interacts with E2 protein; this interaction increases E1 DNA binding specificity. Interacts with host DNA polymerase subunit POLA2. Interacts with host single stranded DNA-binding protein RPA1. Interacts with host TOP1; this interaction stimulates the enzymatic activity of TOP1. Phosphorylated. Post-translationally, sumoylated.

The protein resides in the host nucleus. The enzyme catalyses Couples ATP hydrolysis with the unwinding of duplex DNA by translocating in the 3'-5' direction.. The catalysed reaction is ATP + H2O = ADP + phosphate + H(+). Its function is as follows. ATP-dependent DNA 3'-5' helicase required for initiation of viral DNA replication. It forms a complex with the viral E2 protein. The E1-E2 complex binds to the replication origin which contains binding sites for both proteins. During the initial step, a dimer of E1 interacts with a dimer of protein E2 leading to a complex that binds the viral origin of replication with high specificity. Then, a second dimer of E1 displaces the E2 dimer in an ATP-dependent manner to form the E1 tetramer. Following this, two E1 monomers are added to each half of the site, which results in the formation of two E1 trimers on the viral ori. Subsequently, two hexamers will be created. The double hexamer acts as a bi-directional helicase machinery and unwinds the viral DNA and then recruits the host DNA polymerase to start replication. This chain is Replication protein E1, found in Homo sapiens (Human).